The chain runs to 247 residues: ATP synthase subunit a (247 aa).

6 consecutive transmembrane segments (helical) span residues I24 to M44, F82 to I102, I112 to Y132, L141 to I161, G181 to V201, and A206 to L226.

This sequence belongs to the ATPase A chain family. In terms of assembly, F-type ATPases have 2 components, CF(1) - the catalytic core - and CF(0) - the membrane proton channel. CF(1) has five subunits: alpha(3), beta(3), gamma(1), delta(1), epsilon(1). CF(0) has four main subunits: a, b, b' and c.

Its subcellular location is the cell inner membrane. Its function is as follows. Key component of the proton channel; it plays a direct role in the translocation of protons across the membrane. This Bradyrhizobium sp. (strain ORS 278) protein is ATP synthase subunit a.